Here is a 712-residue protein sequence, read N- to C-terminus: Ribosomal RNA large subunit methyltransferase K/L (712 aa).

Positions 43-154 (LAYRITLWTR…NGQLTISMNF (112 aa)) constitute a THUMP domain.

Belongs to the methyltransferase superfamily. RlmKL family.

Its subcellular location is the cytoplasm. It catalyses the reaction guanosine(2445) in 23S rRNA + S-adenosyl-L-methionine = N(2)-methylguanosine(2445) in 23S rRNA + S-adenosyl-L-homocysteine + H(+). The catalysed reaction is guanosine(2069) in 23S rRNA + S-adenosyl-L-methionine = N(2)-methylguanosine(2069) in 23S rRNA + S-adenosyl-L-homocysteine + H(+). In terms of biological role, specifically methylates the guanine in position 2445 (m2G2445) and the guanine in position 2069 (m7G2069) of 23S rRNA. In Shewanella frigidimarina (strain NCIMB 400), this protein is Ribosomal RNA large subunit methyltransferase K/L.